Consider the following 330-residue polypeptide: Fructose-1,6-bisphosphatase class 1 (330 aa).

Mg(2+) is bound by residues glutamate 78, aspartate 97, leucine 99, and aspartate 100. Substrate-binding positions include 100 to 103 (DGSS) and asparagine 188. Glutamate 260 contributes to the Mg(2+) binding site.

This sequence belongs to the FBPase class 1 family. Homotetramer. Mg(2+) serves as cofactor.

The protein resides in the cytoplasm. It catalyses the reaction beta-D-fructose 1,6-bisphosphate + H2O = beta-D-fructose 6-phosphate + phosphate. Its pathway is carbohydrate biosynthesis; gluconeogenesis. This is Fructose-1,6-bisphosphatase class 1 from Paracoccus denitrificans (strain Pd 1222).